The chain runs to 215 residues: Ribonuclease T (215 aa).

Positions 20–194 constitute an Exonuclease domain; sequence VVIDVETAGF…YDTEQTAQLF (175 aa). Mg(2+) contacts are provided by Asp23, Glu25, His181, and Asp186. His181 acts as the Proton donor/acceptor in catalysis.

The protein belongs to the RNase T family. As to quaternary structure, homodimer. The cofactor is Mg(2+).

Its function is as follows. Trims short 3' overhangs of a variety of RNA species, leaving a one or two nucleotide 3' overhang. Responsible for the end-turnover of tRNA: specifically removes the terminal AMP residue from uncharged tRNA (tRNA-C-C-A). Also appears to be involved in tRNA biosynthesis. This is Ribonuclease T from Klebsiella pneumoniae subsp. pneumoniae (strain ATCC 700721 / MGH 78578).